A 416-amino-acid chain; its full sequence is Diaminobutyrate--2-oxoglutarate transaminase (416 aa).

At Lys263 the chain carries N6-(pyridoxal phosphate)lysine.

The protein belongs to the class-III pyridoxal-phosphate-dependent aminotransferase family. Pyridoxal 5'-phosphate serves as cofactor.

It carries out the reaction L-2,4-diaminobutanoate + 2-oxoglutarate = L-aspartate 4-semialdehyde + L-glutamate. It functions in the pathway amine and polyamine biosynthesis; ectoine biosynthesis; L-ectoine from L-aspartate 4-semialdehyde: step 1/3. Catalyzes reversively the conversion of L-aspartate beta-semialdehyde (ASA) to L-2,4-diaminobutyrate (DABA) by transamination with L-glutamate. In Virgibacillus pantothenticus, this protein is Diaminobutyrate--2-oxoglutarate transaminase (ectB).